Consider the following 266-residue polypeptide: Large ribosomal subunit protein eL8 (266 aa).

A compositionally biased stretch (basic residues) spans 1 to 11 (MPKGKKAKGKK). 2 disordered regions span residues 1 to 28 (MPKGKKAKGKKVAPAPSVAKKHEAKKVV) and 105 to 134 (ETKQEKKKRLLARAEQKAAGKGDAPTKRPP). Basic and acidic residues predominate over residues 116-130 (ARAEQKAAGKGDAPT).

Belongs to the eukaryotic ribosomal protein eL8 family. In terms of assembly, component of the large ribosomal subunit.

It is found in the cytoplasm. Its function is as follows. Component of the large ribosomal subunit. The ribosome is a large ribonucleoprotein complex responsible for the synthesis of proteins in the cell. The sequence is that of Large ribosomal subunit protein eL8 (rpl7a) from Takifugu rubripes (Japanese pufferfish).